Consider the following 293-residue polypeptide: Protease HtpX (293 aa).

A run of 2 helical transmembrane segments spans residues 4–24 (IALFLITNLAVMLVFGLVLSL) and 34–54 (GLMIMAGLFGFGGAFVSLLMS). A Zn(2+)-binding site is contributed by His-139. Residue Glu-140 is part of the active site. His-143 provides a ligand contact to Zn(2+). 2 consecutive transmembrane segments (helical) span residues 158–178 (IVNTFVIFISRLIAQVVSGFL) and 193–213 (MVYFAVATVLELVFGILASII). Glu-222 serves as a coordination point for Zn(2+).

Belongs to the peptidase M48B family. It depends on Zn(2+) as a cofactor.

It localises to the cell inner membrane. The sequence is that of Protease HtpX from Pectobacterium atrosepticum (strain SCRI 1043 / ATCC BAA-672) (Erwinia carotovora subsp. atroseptica).